A 486-amino-acid polypeptide reads, in one-letter code: Cysteine--tRNA ligase (486 aa).

Residue C29 coordinates Zn(2+). Positions 31–41 (ITVYDYCHLGH) match the 'HIGH' region motif. 3 residues coordinate Zn(2+): C215, H240, and E244. A 'KMSKS' region motif is present at residues 272-276 (KMSKS). An ATP-binding site is contributed by K275.

Belongs to the class-I aminoacyl-tRNA synthetase family. As to quaternary structure, monomer. It depends on Zn(2+) as a cofactor.

Its subcellular location is the cytoplasm. The catalysed reaction is tRNA(Cys) + L-cysteine + ATP = L-cysteinyl-tRNA(Cys) + AMP + diphosphate. The protein is Cysteine--tRNA ligase of Gloeothece citriformis (strain PCC 7424) (Cyanothece sp. (strain PCC 7424)).